We begin with the raw amino-acid sequence, 358 residues long: WD repeat-containing protein 53 (358 aa).

WD repeat units lie at residues 8–46, 92–131, 134–174, 195–234, and 239–278; these read GHSS…LGHT, VNEE…ISRS, RHSN…PLWI, LNPA…CEQE, and GHSL…EKKH. The segment covering 278 to 294 has biased composition (basic residues); sequence HKSPTKHTHRKKTKRAA. Positions 278–309 are disordered; that stretch reads HKSPTKHTHRKKTKRAAYTKQGGGTHASVTGE.

It belongs to the WD repeat WDR53 family.

The protein is WD repeat-containing protein 53 (WDR53) of Bos taurus (Bovine).